Here is an 89-residue protein sequence, read N- to C-terminus: Dynein light chain 1, cytoplasmic (89 aa).

It belongs to the dynein light chain family. As to quaternary structure, interacts with spn-F. Forms ternary complexes with spn-F and IKKepsilon. Ubiquitous.

It localises to the cytoplasm. It is found in the cytoskeleton. Its function is as follows. Acts as a non-catalytic accessory component of a dynein complex. In Drosophila melanogaster (Fruit fly), this protein is Dynein light chain 1, cytoplasmic (ctp).